Here is a 705-residue protein sequence, read N- to C-terminus: Glycine--tRNA ligase beta subunit (705 aa).

This sequence belongs to the class-II aminoacyl-tRNA synthetase family. Tetramer of two alpha and two beta subunits.

The protein resides in the cytoplasm. The enzyme catalyses tRNA(Gly) + glycine + ATP = glycyl-tRNA(Gly) + AMP + diphosphate. The sequence is that of Glycine--tRNA ligase beta subunit from Persephonella marina (strain DSM 14350 / EX-H1).